The primary structure comprises 659 residues: DNA ligase (659 aa).

Residues 32-36 (DAEYD), 81-82 (SL), and E110 each bind NAD(+). K112 acts as the N6-AMP-lysine intermediate in catalysis. NAD(+) is bound by residues R133, E168, K284, and K308. Positions 402, 405, 420, and 425 each coordinate Zn(2+). The BRCT domain occupies 582 to 659 (AKPQIFAGKS…SEEEFAELLP (78 aa)).

Belongs to the NAD-dependent DNA ligase family. LigA subfamily. Mg(2+) serves as cofactor. The cofactor is Mn(2+).

The catalysed reaction is NAD(+) + (deoxyribonucleotide)n-3'-hydroxyl + 5'-phospho-(deoxyribonucleotide)m = (deoxyribonucleotide)n+m + AMP + beta-nicotinamide D-nucleotide.. In terms of biological role, DNA ligase that catalyzes the formation of phosphodiester linkages between 5'-phosphoryl and 3'-hydroxyl groups in double-stranded DNA using NAD as a coenzyme and as the energy source for the reaction. It is essential for DNA replication and repair of damaged DNA. In Desulfitobacterium hafniense (strain Y51), this protein is DNA ligase.